Reading from the N-terminus, the 128-residue chain is Small ribosomal subunit protein bS6 (128 aa).

Residues 100-128 are disordered; that stretch reads SPMAKAKEERFTRRDDERREEATEAASEE. Residues 104 to 121 show a composition bias toward basic and acidic residues; that stretch reads KAKEERFTRRDDERREEA.

It belongs to the bacterial ribosomal protein bS6 family.

Binds together with bS18 to 16S ribosomal RNA. This chain is Small ribosomal subunit protein bS6, found in Aeromonas hydrophila subsp. hydrophila (strain ATCC 7966 / DSM 30187 / BCRC 13018 / CCUG 14551 / JCM 1027 / KCTC 2358 / NCIMB 9240 / NCTC 8049).